A 340-amino-acid polypeptide reads, in one-letter code: GTPase Obg (340 aa).

Residues 1–159 (MGFIDEVKLC…KHVLLKLKVL (159 aa)) enclose the Obg domain. The region spanning 160 to 329 (SDVGIIGMPN…LSEKLKKSNS (170 aa)) is the OBG-type G domain. Residues 166–173 (GMPNAGKS), 191–195 (FTTVR), 212–215 (DIPG), 279–282 (NKCD), and 310–312 (NGD) each bind GTP. Mg(2+) is bound by residues Ser173 and Thr193.

Belongs to the TRAFAC class OBG-HflX-like GTPase superfamily. OBG GTPase family. As to quaternary structure, monomer. Mg(2+) serves as cofactor.

It is found in the cytoplasm. Its function is as follows. An essential GTPase which binds GTP, GDP and possibly (p)ppGpp with moderate affinity, with high nucleotide exchange rates and a fairly low GTP hydrolysis rate. Plays a role in control of the cell cycle, stress response, ribosome biogenesis and in those bacteria that undergo differentiation, in morphogenesis control. The protein is GTPase Obg of Wolbachia pipientis wMel.